We begin with the raw amino-acid sequence, 476 residues long: Proline--tRNA ligase (476 aa).

Belongs to the class-II aminoacyl-tRNA synthetase family. ProS type 3 subfamily. As to quaternary structure, homodimer.

It is found in the cytoplasm. The catalysed reaction is tRNA(Pro) + L-proline + ATP = L-prolyl-tRNA(Pro) + AMP + diphosphate. Catalyzes the attachment of proline to tRNA(Pro) in a two-step reaction: proline is first activated by ATP to form Pro-AMP and then transferred to the acceptor end of tRNA(Pro). The sequence is that of Proline--tRNA ligase from Mycoplasma mobile (strain ATCC 43663 / 163K / NCTC 11711) (Mesomycoplasma mobile).